The sequence spans 2253 residues: Polycystin family receptor for egg jelly (2253 aa).

The signal sequence occupies residues 1 to 19 (MRPGPALLLLGVGLSLSVG). At 20–1184 (RLPLPPVPRG…NIIKSLHQNP (1165 aa)) the chain is on the extracellular side. Positions 154 to 169 (RPASPAARVSPRSAAP) are enriched in low complexity. The disordered stretch occupies residues 154-177 (RPASPAARVSPRSAAPGPRPQQGF). Asparagine 197, asparagine 242, asparagine 295, asparagine 306, asparagine 345, asparagine 349, asparagine 481, asparagine 674, asparagine 849, asparagine 890, asparagine 923, asparagine 939, asparagine 958, and asparagine 965 each carry an N-linked (GlcNAc...) asparagine glycan. One can recognise an REJ domain in the interval 215-913 (CVIQRVRINT…STMFCDFTND (699 aa)). The helical transmembrane segment at 1185–1205 (VTLFTVLFIILLYVGLAFWAL) threads the bilayer. Topologically, residues 1206–1389 (YRDEMDQHLR…VAKTFNRLQR (184 aa)) are cytoplasmic. A PLAT domain is found at 1230–1347 (LCYLVTIFTG…TLDRTFHVTH (118 aa)). Residues 1390-1410 (LSCCLAMLLSSLLCNIMFFNL) traverse the membrane as a helical segment. Over 1411 to 1427 (NRQEQTESRERKYMRSM) the chain is Extracellular. Residues 1428-1448 (MIGIESVLITIPVQLLITFLF) traverse the membrane as a helical segment. The Cytoplasmic segment spans residues 1449-1576 (TCSQRKPQAD…KPRIVLPWWC (128 aa)). Residues 1494–1562 (PREVAKPASK…EQHPSQKDLQ (69 aa)) are disordered. The span at 1517–1527 (SKPKHRHRKAQ) shows a compositional bias: basic residues. A compositionally biased stretch (basic and acidic residues) spans 1549-1558 (DVHSEQHPSQ). Residues 1577–1597 (VYVAWFLVFATSSISSFFIVF) traverse the membrane as a helical segment. The Extracellular segment spans residues 1598–1607 (YGLTYGYDKS). A helical membrane pass occupies residues 1608–1628 (IEWLFASFCSFCQSVLLVQPS). At 1629–1708 (KIILLSGFRT…RKKRIKRRAL (80 aa)) the chain is on the cytoplasmic side. Residues 1709–1729 (LFLSYILTHFIFLALLLILIV) traverse the membrane as a helical segment. Residues 1730 to 1966 (LLRHTDCFYY…FDRKASAEIY (237 aa)) lie on the Extracellular side of the membrane. Residues asparagine 1836, asparagine 1893, and asparagine 1944 are each glycosylated (N-linked (GlcNAc...) asparagine). The helical transmembrane segment at 1967 to 1987 (LYVAILIFFLAYVVDEGCIIM) threads the bilayer. The Cytoplasmic portion of the chain corresponds to 1988-1996 (QERASYVRS). A helical membrane pass occupies residues 1997–2017 (VYNLLNFALKCIFTVLIVLFL). Residues 2018 to 2042 (RKHFLATGIIRFYLSNPEDFIPFHA) lie on the Extracellular side of the membrane. A helical transmembrane segment spans residues 2043 to 2063 (VSQVDHIMRIILGFLLFLTIL). The Cytoplasmic portion of the chain corresponds to 2064–2091 (KTLRYSRFFYDVRLAQRAIQAALPGICH). The helical transmembrane segment at 2092-2112 (MAFVVSVYFFVYMAFGYLVFG) threads the bilayer. Topologically, residues 2113 to 2145 (QHEWNYSNLIHSTQTVFSYCVSAFQNTEFSNNR) are extracellular. The chain crosses the membrane as a helical span at residues 2146 to 2166 (ILGVLFLSSFMLVMICVLINL). At 2167 to 2253 (FQAVILSAYE…NGKKMVYLVV (87 aa)) the chain is on the cytoplasmic side.

Belongs to the polycystin family. As to expression, exclusively expressed in testis.

The protein localises to the cell membrane. Its subcellular location is the cytoplasmic vesicle. It is found in the secretory vesicle. It localises to the acrosome membrane. The protein resides in the nucleus. In terms of biological role, testis-specific protein that controls sperm transport and the timing of zona pellucida-evoked exocytosis of the sperm acrosome. The polypeptide is Polycystin family receptor for egg jelly (Homo sapiens (Human)).